We begin with the raw amino-acid sequence, 235 residues long: Small ribosomal subunit protein uS2c (235 aa).

It belongs to the universal ribosomal protein uS2 family.

The protein resides in the plastid. It localises to the chloroplast. This chain is Small ribosomal subunit protein uS2c (rps2), found in Guillardia theta (Cryptophyte).